We begin with the raw amino-acid sequence, 709 residues long: SH3 domain-containing kinase-binding protein 1 (709 aa).

SH3 domains follow at residues 1-58 (MVEA…EIKK) and 98-157 (RRRR…ELSG). Residues S156, S159, S227, and S274 each carry the phosphoserine modification. Positions 221–239 (ETTGSESDGGDSSSTKSEG) are enriched in low complexity. Residues 221 to 242 (ETTGSESDGGDSSSTKSEGANG) form a disordered region. Disordered regions lie at residues 289–309 (GKKLPPATSTPDPSKTEMDSR), 372–485 (SDFD…KIDL), and 511–650 (DSVI…VSSQ). T298 bears the Phosphothreonine mark. Residues 311-372 (KTKDYCKVIF…PDNFVKLLPS (62 aa)) form the SH3 3 domain. Positions 399–434 (TERKHEIKKIPPERPETLPNRTEEKERPEREPKLDL) are enriched in basic and acidic residues. Position 480 is a phosphoserine (S480). Residues 513 to 528 (VISSTEKLSHPTTSRP) show a composition bias toward polar residues. Over residues 535 to 554 (PPSQSLTSSSLSSPDIFDSP) the composition is skewed to low complexity. 3 positions are modified to phosphoserine: S553, S555, and S565. Positions 561–575 (EEHISLAHRGIDVSK) are enriched in basic and acidic residues. The span at 579 to 592 (KTVTISQVSDNKTS) shows a compositional bias: polar residues. Low complexity predominate over residues 600–623 (MAAASSGPASLSSVASSPMSSSLG). Residues 627-636 (QRASSPSLFS) show a composition bias toward polar residues. S631 carries the post-translational modification Phosphoserine. Residues 646 to 708 (AVSSQAAIEE…VNDIKKALQS (63 aa)) adopt a coiled-coil conformation.

In terms of assembly, can self-associate and form homotetramers. Interacts with CD2, F-actin capping protein, PIK3R3, GRB2, EGFR, MET, BLNK, MAP3K4, PDCD6IP, SPRY2, ARHGAP17, ARHGAP27, CRK, BCAR1, SOS1, ASAP1, ARAP3, HIP1R, SYNJ2, INPP5D and STAP1. Interacts with E3 ubiquitin-protein ligase CBL. Interacts with CBLB, but does not interact with CBLC. Two molecules of SH3KBP1 seem to bind through their respective SH3 1 domain to one molecule of CBLB. The interaction with CBL or CBLB and EGFR is increased upon EGF stimulation. The interaction with CBL is attenuated by PDCD6IP. Interacts (via SH3 domains) with ARAP1. The interaction is independent of EGF and does not affect ARAP1 GTPase-activating activity but is involved in regulating ubiquitination and endocytic trafficking of EGFR. ARAP1 competes with CBL for binding to SH3KBP1 and prevents interaction of CBL with SH3KBP1; this is likely to regulate SH3KBP1-mediated internalization of EGFR. Interacts through its proline-rich region with the SH3 domain of endophilins SH3GL1, SH3GL2 and SH3GL3. The SH3KBP1-endophilin complex seems to associate with a complex containing the phosphorylated receptor (EGFR or MET) and phosphorylated CBL. Probably associates with ASAP1 and phosphorylated EGFR. Probably part of a complex consisting of at least SH3KBP1, ASAP1 and ARAP3. Interacts with focal adhesion kinases PTK2/FAK1 and PTK2B/PYK2, probably as a dimer. Interacts with DAB2 and probably associates with chathrin through its interaction with DAB2. Part of a complex consisting of SH3KBP1, DAB2, and clathrin heavy chain. DAB2 and clathrin dissociate from SH3KBP1 following growth factor treatment, enabling interaction with CBL. Interacts with DDN and probably associates with MAGI2 through its interaction with DDN. Interacts with the SH3 domains of SRC tyrosine-protein kinases SRC, LCK, LYN, FGR, FYN and HCK. Interacts with TRADD, BIRC2, TRAF1, TRAF2 and TNFR1, and the association with a TNFR1-associated complex upon stimulation with TNF-alpha seems to be mediated by SRC. Probably part of a complex consisting of at least SH3KBP1, ASAP1 and ARAP3. Interacts (via SH3 domains) with SHKBP1 (via PXXXPR motifs). Interacts with ATX2. Interaction with CBL is abolished in the presence of SHKBP1. Interacts (via SH3 domains) with ZFP36 (via extreme C-terminal region). Interacts with MAP3K4; this interaction enhances the association with ZFP36. Monoubiquitinated by CBL and CBLB after EGF stimulation; probably on its C-terminus.

The protein resides in the cytoplasm. The protein localises to the cytoskeleton. Its subcellular location is the cytoplasmic vesicle membrane. It localises to the synapse. It is found in the synaptosome. The protein resides in the cell junction. The protein localises to the focal adhesion. Functionally, adapter protein involved in regulating diverse signal transduction pathways. Involved in the regulation of endocytosis and lysosomal degradation of ligand-induced receptor tyrosine kinases, including EGFR and MET/hepatocyte growth factor receptor, through an association with CBL and endophilins. The association with CBL, and thus the receptor internalization, may be inhibited by an interaction with PDCD6IP and/or SPRY2. Involved in regulation of ligand-dependent endocytosis of the IgE receptor. Attenuates phosphatidylinositol 3-kinase activity by interaction with its regulatory subunit. May be involved in regulation of cell adhesion; promotes the interaction between TTK2B and PDCD6IP. May be involved in the regulation of cellular stress response via the MAPK pathways through its interaction with MAP3K4. Is involved in modulation of tumor necrosis factor mediated apoptosis. Plays a role in the regulation of cell morphology and cytoskeletal organization. Required in the control of cell shape and migration. Has an essential role in the stimulation of B cell activation. This chain is SH3 domain-containing kinase-binding protein 1 (Sh3kbp1), found in Mus musculus (Mouse).